Consider the following 550-residue polypeptide: MPPPPKRKWPNRPRGGGGANGSASGTPTTPRSTVAQQPKRPKVEDAAPAAEGVDVKQMYSTSAGNASAKPFSELSSVLDKSLLDGLDKMGFEFMSPVQQKVLTELPSLSSDCVVQAKTGTGKTVAFLLPAIQNLLAGNMPPRGKVAILVVCPTRELALQIAKECNGVTACLPRKMECHTAFGGTSRASNLKAFLNGNPTILVATPGRLDDILGEEHVRERFTHLKTVVLDEADQMLDAGFAPAVKKILRRIPPKSDGWQGMCFSATLPKEVLDIAKIVLFPGFTHLTTVDPNEVPTHERVPQYFLSVPNVGQTFAALSALIQEEHKQDPTDFKAIVFGTTANGVGLLYDLYKHALPQFRVFELHSRMSQPMRTRTTAQFKEATSGILFASDVVGRGMDFPNVGLVVQLGLPSSTEQYVHRVGRTARAGKDGRAVLVLFEKEAFFPRINRTLPIKPYPVDIAAKVPEQEAAITRAFANVEEEAKAKAYQAFLGYNKTFLKKLQLSTTELVRVANEYSRAMGCPEPPLIEKSTIGKMGLKGVPGLNIGSRRH.

Basic residues predominate over residues 1–11 (MPPPPKRKWPN). Residues 1 to 41 (MPPPPKRKWPNRPRGGGGANGSASGTPTTPRSTVAQQPKRP) constitute a mitochondrion transit peptide. Positions 1–51 (MPPPPKRKWPNRPRGGGGANGSASGTPTTPRSTVAQQPKRPKVEDAAPAAE) are disordered. The Q motif motif lies at 71–99 (FSELSSVLDKSLLDGLDKMGFEFMSPVQQ). The Helicase ATP-binding domain occupies 103-285 (TELPSLSSDC…KIVLFPGFTH (183 aa)). 116–123 (AKTGTGKT) contributes to the ATP binding site. Positions 230-233 (DEAD) match the DEAD box motif. The Helicase C-terminal domain maps to 316 to 472 (ALSALIQEEH…KVPEQEAAIT (157 aa)).

The protein belongs to the DEAD box helicase family. DDX18/HAS1 subfamily.

It is found in the mitochondrion matrix. It catalyses the reaction ATP + H2O = ADP + phosphate + H(+). Functionally, ATP-dependent RNA helicase required for mitochondrial splicing of group I and II introns. Also required for efficient mitochondrial translation. The protein is ATP-dependent RNA helicase MSS116, mitochondrial (MSS116) of Phaeosphaeria nodorum (strain SN15 / ATCC MYA-4574 / FGSC 10173) (Glume blotch fungus).